The sequence spans 509 residues: Maturase K (509 aa).

Belongs to the intron maturase 2 family. MatK subfamily.

It localises to the plastid. It is found in the chloroplast. In terms of biological role, usually encoded in the trnK tRNA gene intron. Probably assists in splicing its own and other chloroplast group II introns. The chain is Maturase K from Thuja occidentalis (Northern white-cedar).